A 125-amino-acid chain; its full sequence is Ribonuclease P protein component (125 aa).

It belongs to the RnpA family. Consists of a catalytic RNA component (M1 or rnpB) and a protein subunit.

It catalyses the reaction Endonucleolytic cleavage of RNA, removing 5'-extranucleotides from tRNA precursor.. In terms of biological role, RNaseP catalyzes the removal of the 5'-leader sequence from pre-tRNA to produce the mature 5'-terminus. It can also cleave other RNA substrates such as 4.5S RNA. The protein component plays an auxiliary but essential role in vivo by binding to the 5'-leader sequence and broadening the substrate specificity of the ribozyme. The polypeptide is Ribonuclease P protein component (Rhodococcus jostii (strain RHA1)).